A 680-amino-acid polypeptide reads, in one-letter code: Probable oxidoreductase YoaE (680 aa).

The 4Fe-4S Mo/W bis-MGD-type domain occupies 9–66 (NGIFKSVCSLDCPDQCGLLIHKKDGKIVKVQGDPDHPVTAGNICNKVRNMTERIYDEK). [4Fe-4S] cluster-binding residues include cysteine 16, cysteine 20, cysteine 24, and cysteine 52.

The protein belongs to the prokaryotic molybdopterin-containing oxidoreductase family. The cofactor is Mo-bis(molybdopterin guanine dinucleotide).

The polypeptide is Probable oxidoreductase YoaE (yoaE) (Bacillus subtilis (strain 168)).